The following is a 355-amino-acid chain: G protein alpha i subunit (355 aa).

Gly-2 is lipidated: N-myristoyl glycine. The S-palmitoyl cysteine moiety is linked to residue Cys-3. In terms of domain architecture, G-alpha spans 33-355 (SEVKLLLLGA…KNNLKQIGLF (323 aa)). The segment at 36 to 49 (KLLLLGAGESGKST) is G1 motif. Residues 41 to 48 (GAGESGKS), 176 to 182 (LRTRVKT), 201 to 205 (DVGGQ), 270 to 273 (NKKD), and Ala-327 each bind GTP. Ser-48 and Thr-182 together coordinate Mg(2+). Residues 174–182 (DVLRTRVKT) form a G2 motif region. The segment at 197 to 206 (FKLFDVGGQR) is G3 motif. Positions 266-273 (ILFLNKKD) are G4 motif. The interval 325–330 (TCATDT) is G5 motif.

Belongs to the G-alpha family. G(i/o/t/z) subfamily. G proteins are composed of 3 units; alpha, beta and gamma. The alpha chain contains the guanine nucleotide binding site. Interacts (via GDP- or GTP-bound forms) with loco (via GoLoco and RGS domains). Interacts with raps/pins.

It localises to the cell membrane. The protein resides in the apical cell membrane. In terms of biological role, guanine nucleotide-binding proteins (G proteins) are involved as modulators or transducers in various transmembrane signaling systems. Plays a role in glial cell differentiation during embryogenesis; loco, Galphao and the G-protein coupled receptor, moody, are required in the surface glia to achieve effective insulation of the nerve cord. This Drosophila melanogaster (Fruit fly) protein is G protein alpha i subunit (Galphai).